The chain runs to 260 residues: Ribosomal RNA small subunit methyltransferase A (260 aa).

Positions 23, 48, 69, 94, and 110 each coordinate S-adenosyl-L-methionine.

Belongs to the class I-like SAM-binding methyltransferase superfamily. rRNA adenine N(6)-methyltransferase family. RsmA subfamily.

It localises to the cytoplasm. The catalysed reaction is adenosine(1518)/adenosine(1519) in 16S rRNA + 4 S-adenosyl-L-methionine = N(6)-dimethyladenosine(1518)/N(6)-dimethyladenosine(1519) in 16S rRNA + 4 S-adenosyl-L-homocysteine + 4 H(+). Functionally, specifically dimethylates two adjacent adenosines (A1518 and A1519) in the loop of a conserved hairpin near the 3'-end of 16S rRNA in the 30S particle. May play a critical role in biogenesis of 30S subunits. This Thermotoga petrophila (strain ATCC BAA-488 / DSM 13995 / JCM 10881 / RKU-1) protein is Ribosomal RNA small subunit methyltransferase A.